Reading from the N-terminus, the 787-residue chain is ABC transporter G family member 5 (787 aa).

Residues 1-17 (MSRFVDKLPLFDRRPSP) show a composition bias toward basic and acidic residues. Disordered stretches follow at residues 1–25 (MSRFVDKLPLFDRRPSPMEEAEGLP) and 71–116 (NDAR…EGQP). Residues 74-85 (RSGSSTPISSPR) are compositionally biased toward polar residues. An ABC transporter domain is found at 121-382 (LKFTDLTYSV…FLDFGKPIPD (262 aa)). Residue 175 to 182 (GASGSGKS) coordinates ATP. The ABC transmembrane type-2 domain occupies 484–691 (GVLTRRAFIN…PYEAVMQNEF (208 aa)). 8 helical membrane passes run 500–520 (VFIIRLAAVLVTGFILATIFW), 535–555 (FFAIAMSTMYYTCSDALPVFL), 576–596 (VLSHTIVGFPSLVVLSFAFAL), 599–619 (FFSVGLAGGVNGFFYFVAIVL), 620–640 (ASFWAGSGFATFLSGVVTHVM), 641–661 (LGFPVVLSTLAYFLLFSGFFI), 728–745 (SLGVNIGTGTCITTGPDF), and 760–780 (LWITVAWGFLFRILFYISLLL).

The protein belongs to the ABC transporter superfamily. ABCG family. Eye pigment precursor importer (TC 3.A.1.204) subfamily. As to expression, expressed in the crown root primordia, endodermis, pericycle and stele in the root, in leaf primordia of main and axillary shoots, and in the vascular cells and leaf epidermis of older leaves.

The protein localises to the cell membrane. Its function is as follows. Essential transporter for growth and development under abiotic stress. Mediates shoot branching by promoting the outgrowth of lateral shoots. Required for salt tolerance via Na/K homeostasis, at least partly by regulating SKC1/OsHKT1;5. Necessary for hypodermal suberization of roots, which contributes to formation of the apoplastic barrier. The chain is ABC transporter G family member 5 from Oryza sativa subsp. japonica (Rice).